The following is a 325-amino-acid chain: DNA repair and recombination protein RadA (325 aa).

107–114 contacts ATP; sequence GEFGSGKT.

It belongs to the eukaryotic RecA-like protein family.

Its function is as follows. Involved in DNA repair and in homologous recombination. Binds and assemble on single-stranded DNA to form a nucleoprotein filament. Hydrolyzes ATP in a ssDNA-dependent manner and promotes DNA strand exchange between homologous DNA molecules. In Methanococcoides burtonii (strain DSM 6242 / NBRC 107633 / OCM 468 / ACE-M), this protein is DNA repair and recombination protein RadA.